A 266-amino-acid chain; its full sequence is Glutamate racemase (266 aa).

Residues 9-10 (DS) and 41-42 (YG) each bind substrate. Residue Cys72 is the Proton donor/acceptor of the active site. Position 73 to 74 (73 to 74 (NT)) interacts with substrate. The active-site Proton donor/acceptor is the Cys184. 185-186 (TH) is a binding site for substrate.

This sequence belongs to the aspartate/glutamate racemases family. Homodimer.

It carries out the reaction L-glutamate = D-glutamate. Its pathway is cell wall biogenesis; peptidoglycan biosynthesis. Functionally, provides the (R)-glutamate required for cell wall biosynthesis. The polypeptide is Glutamate racemase (Staphylococcus aureus (strain MRSA252)).